We begin with the raw amino-acid sequence, 544 residues long: MAEADPKMVTEPGAHGVAEEAMASTACDSGDESDSNSSSSTNSCSSSGSSSSGSSSSSSSSSSSSSSSSSSSSGSSGSSSNGSHLNRKKRVPEPSRRAQRRPSGKLFLDKLPQAVRNRVQALRNIQNECDKVDTLFLRAIHDLERKYAELNKPLYDKRFQIINAEYEPTEEECEWNSEEEFSGDEEMQDDTPNEMPPLEGEEEEESCNEKAEVKEEGTHVPEEVPEAKVEEEEAPKETPEVKTEEKDIPKEGAEEKAEEQESSKEIPEVKGEEKADSTDCIDIAPEEKEDVKEVTQANTENKDQPTEEFTPRAPAREAQKRVPETRPEEGVNIKRARKGKPKKEDPKGIPDYWLTVLKNVDKLGPMIQKCDEPILKFLSDVSLKFSNPGQPIGYTFEFHFLPNPYFRNELLMKTYIIRSKPDHYDPFFAWGWEIEECKGCKIDWRRGKDVTVTTTRSRPGITGEIEVQPRVVPNASFFNFFSPPEIPLIGKLEPREDAILDEDFEIGQILHDNVILKSIYYFTGEINDPYYHDFRDYGNRKYYK.

2 disordered regions span residues 1–109 and 168–345; these read MAEA…LFLD and PTEE…KKED. Positions 35–83 are enriched in low complexity; that stretch reads SNSSSSTNSCSSSGSSSSGSSSSSSSSSSSSSSSSSSSSGSSGSSSNGS. Acidic residues predominate over residues 168–192; it reads PTEEECEWNSEEEFSGDEEMQDDTP. Composition is skewed to basic and acidic residues over residues 207–228, 235–277, and 314–332; these read CNEK…PEAK, PKET…KADS, and PARE…EGVN.

The protein belongs to the nucleosome assembly protein (NAP) family. In terms of tissue distribution, expressed in brain.

It is found in the nucleus. The protein resides in the cytoplasm. The sequence is that of Nucleosome assembly protein 1-like 3 (Nap1l3) from Mus musculus (Mouse).